The following is a 327-amino-acid chain: Porphobilinogen deaminase (327 aa).

Residue Cys-251 is modified to S-(dipyrrolylmethanemethyl)cysteine.

The protein belongs to the HMBS family. It depends on dipyrromethane as a cofactor.

It carries out the reaction 4 porphobilinogen + H2O = hydroxymethylbilane + 4 NH4(+). It participates in porphyrin-containing compound metabolism; protoporphyrin-IX biosynthesis; coproporphyrinogen-III from 5-aminolevulinate: step 2/4. Functionally, catalyzes the tetrapolymerization of the monopyrrole porphobilinogen (PBG) into the hydroxymethylbilane pre-uroporphyrinogen in several discrete steps. This is Porphobilinogen deaminase (HEM3) from Saccharomyces cerevisiae (strain ATCC 204508 / S288c) (Baker's yeast).